Reading from the N-terminus, the 129-residue chain is Prefoldin subunit 6 (129 aa).

2 coiled-coil regions span residues valine 6–aspartate 26 and isoleucine 84–arginine 118.

It belongs to the prefoldin subunit beta family. In terms of assembly, heterohexamer of two PFD-alpha type and four PFD-beta type subunits forming prefoldin co-chaperone complex. Interacts with PFD2, PFD3, PFD4 and PFD5. Interacts with LSM8, a specific subunit of the LSM2-8 complex, which is a core component of the spliceosome. Binds to HSP90 to facilitate the formation of a larger complex made at least of HSP90, PFD6 and LSM8.

Its subcellular location is the cytoplasm. The protein resides in the nucleus. In terms of biological role, binds specifically to cytosolic chaperonin (c-CPN) and transfers target proteins to it. Binds to nascent polypeptide chain and promotes folding in an environment in which there are many competing pathways for nonnative proteins. Together with other chaperonins, contribute to the regulation of gene expression by modulating the spliceosome function on pre-mRNA splicing post-transcriptionally by acting as a co-chaperone of Hsp90 to control levels of LSM8. Required for the biogenesis of tubulins and for subsequent microtubules (MTs) organization and dynamicity, but unable to associate with microtubules. Involved in the process leading to microtubules dissociation in response to gibberellic acid (GA) probably due to the DELLA proteins-mediated translocation of the prefoldin co-chaperone complex from the cytoplasm to the nucleus. Contributes to the GA-dependent regulation of PIN2 trafficking at the plasma membrane, thus influencing auxin flux. The chain is Prefoldin subunit 6 from Arabidopsis thaliana (Mouse-ear cress).